A 223-amino-acid polypeptide reads, in one-letter code: Ethylene-inducing xylanase 1 (223 aa).

Residues 1 to 19 (MVSFTSLLAAFSVVSGVLT) form the signal peptide. Residues 34-223 (KRTPSSTGTS…SSGSATMTVS (190 aa)) enclose the GH11 domain. The active-site Nucleophile is Glu-119. Residues 174–184 (RRTKRTSGSVN) form a nuclear localization signal region. The active-site Proton donor is Glu-210.

It belongs to the glycosyl hydrolase 11 (cellulase G) family.

Its subcellular location is the secreted. It localises to the host nucleus. The catalysed reaction is Endohydrolysis of (1-&gt;4)-beta-D-xylosidic linkages in xylans.. The protein operates within glycan degradation; xylan degradation. In terms of biological role, endo-1,4-beta-xylanase involved in the hydrolysis of xylan, a major structural heterogeneous polysaccharide found in plant biomass representing the second most abundant polysaccharide in the biosphere, after cellulose. Acts as an effector that localizes to the host nucleus to contribute to the virulence process. Induces host innate immunity responses; triggers BAK1-and SOBIR1-dependent cell death, salicylic acid signaling and jasmonic acid signaling. Does not exhibit any cell death when transiently expressed in N.benthamiana. This chain is Ethylene-inducing xylanase 1, found in Verticillium dahliae (strain VdLs.17 / ATCC MYA-4575 / FGSC 10137) (Verticillium wilt).